Consider the following 62-residue polypeptide: MKTSILFVIFSLALLFALSAATEIEETDRACGQFWWKCGEGKPPCCANFACKIGLYLCIWSP.

The signal sequence occupies residues 1 to 21 (MKTSILFVIFSLALLFALSAA). Positions 22–29 (TEIEETDR) are excised as a propeptide. 3 cysteine pairs are disulfide-bonded: Cys-31-Cys-46, Cys-38-Cys-51, and Cys-45-Cys-58.

It belongs to the neurotoxin 10 (Hwtx-1) family. 33 (Jztx-1) subfamily. Expressed by the venom gland.

The protein localises to the secreted. In terms of biological role, inhibits voltage-gated sodium channels, preferentially subtype Nav1.5/SCN5A (in cardiac myocytes), but also Nav1.6/SCN8A and Nav1.7/SCN9A (TTX-sensitive Nav in rat DRG neurons) and invertebrate Nav (in insect neurons) as well as voltage-gated potassium channels of the subtype Kv2.1/KCNB1. Is suggested to bind to site 3 of the sodium channels and inhibit the inactivation of the activated channels, thereby blocking neuronal transmission. On potassium channels, inhibits activation of channels with an IC(50) of 8.05 uM through a voltage sensor-trapping mechanism. Increases muscle contraction in several assays (mouse phrenic nerve-diaphragm, toad heart, rat vas deferens) and is suggested to act both presynaptically and postsynaptically. Moderately inhibits voltage-gated sodium channels and weakly inhibits voltage-gated potassium channel. Inhibits the inactivation of rat Nav1.2/SCN2A (IC(50)=870 nM), rat Nav1.3/SCN3A (IC(50)=845 nM), rat Nav1.4/SCN4A (IC(50)=339 nM), human Nav1.5/SCN5A (IC(50)=335 nM) and human Nav1.7/SCN9A sodium channels (IC(50)=348 nM). The toxin delays the inactivation of sodium channels without affecting the activation and steady-state inactivation kinetics in the physiological range of voltages. Site-directed mutagenesis of the sodium channel indicates that the toxin interacts with site 3 located at the extracellular S3-S4 linker of domain IV. On potassium channels, it inhibits activation of channels with an IC(50) of 8.05 uM through a voltage sensor-trapping mechanism. It increases muscle contraction in several assays (mouse phrenic nerve-diaphragm, toad heart, rat vas deferens) and is suggested to act both presynaptically and postsynaptically. This chain is Delta-theraphotoxin-Cg1a 1, found in Chilobrachys guangxiensis (Chinese earth tiger tarantula).